Reading from the N-terminus, the 399-residue chain is Alpha-tubulin N-acetyltransferase (399 aa).

Positions 1–178 constitute an N-acetyltransferase domain; sequence MEFNFIINKL…NNFVVFDQYF (178 aa). Residues 112–125 and 148–157 each bind acetyl-CoA; these read FYVHESCQRQGYGK and SPKLIAFLKK. The segment covering 183 to 193 has biased composition (polar residues); it reads SSQNKQNQNTR. The segment at 183–223 is disordered; it reads SSQNKQNQNTRSYSQPYSDYSSQIPTNYPQQQQQQSNSKSY. Low complexity predominate over residues 194-223; that stretch reads SYSQPYSDYSSQIPTNYPQQQQQQSNSKSY.

This sequence belongs to the acetyltransferase ATAT1 family.

The enzyme catalyses L-lysyl-[alpha-tubulin] + acetyl-CoA = N(6)-acetyl-L-lysyl-[alpha-tubulin] + CoA + H(+). Specifically acetylates 'Lys-40' in alpha-tubulin on the lumenal side of microtubules. Promotes microtubule destabilization and accelerates microtubule dynamics; this activity may be independent of acetylation activity. Acetylates alpha-tubulin with a slow enzymatic rate, due to a catalytic site that is not optimized for acetyl transfer. Enters the microtubule through each end and diffuses quickly throughout the lumen of microtubules. Acetylates only long/old microtubules because of its slow acetylation rate since it does not have time to act on dynamically unstable microtubules before the enzyme is released. The chain is Alpha-tubulin N-acetyltransferase from Tetrahymena thermophila (strain SB210).